Here is a 384-residue protein sequence, read N- to C-terminus: A-type ATP synthase subunit C (384 aa).

Belongs to the V-ATPase V0D/AC39 subunit family. In terms of assembly, has multiple subunits with at least A(3), B(3), C, D, E, F, H, I and proteolipid K(x).

The protein localises to the cell membrane. Its function is as follows. Component of the A-type ATP synthase that produces ATP from ADP in the presence of a proton gradient across the membrane. The chain is A-type ATP synthase subunit C from Methanobrevibacter smithii (strain ATCC 35061 / DSM 861 / OCM 144 / PS).